We begin with the raw amino-acid sequence, 315 residues long: Acetyl-coenzyme A carboxylase carboxyl transferase subunit beta, chloroplastic (315 aa).

The CoA carboxyltransferase N-terminal domain maps to 47–315 (LWTRCDSCEN…VYKESNSYLF (269 aa)). 4 residues coordinate Zn(2+): Cys51, Cys54, Cys70, and Cys73. The C4-type zinc finger occupies 51-73 (CDSCENMLYVRFLKQNKRICEEC).

Belongs to the AccD/PCCB family. Acetyl-CoA carboxylase is a heterohexamer composed of biotin carboxyl carrier protein, biotin carboxylase and 2 subunits each of ACCase subunit alpha and ACCase plastid-coded subunit beta (accD). Zn(2+) serves as cofactor.

The protein resides in the plastid. It localises to the chloroplast stroma. The enzyme catalyses N(6)-carboxybiotinyl-L-lysyl-[protein] + acetyl-CoA = N(6)-biotinyl-L-lysyl-[protein] + malonyl-CoA. It functions in the pathway lipid metabolism; malonyl-CoA biosynthesis; malonyl-CoA from acetyl-CoA: step 1/1. Component of the acetyl coenzyme A carboxylase (ACC) complex. Biotin carboxylase (BC) catalyzes the carboxylation of biotin on its carrier protein (BCCP) and then the CO(2) group is transferred by the transcarboxylase to acetyl-CoA to form malonyl-CoA. This Physcomitrium patens (Spreading-leaved earth moss) protein is Acetyl-coenzyme A carboxylase carboxyl transferase subunit beta, chloroplastic.